The sequence spans 217 residues: UPF0502 protein ESA_02280 (217 aa).

It belongs to the UPF0502 family.

The polypeptide is UPF0502 protein ESA_02280 (Cronobacter sakazakii (strain ATCC BAA-894) (Enterobacter sakazakii)).